The following is a 454-amino-acid chain: Flavonoid 3-O-glucosyltransferase (454 aa).

Residue threonine 25 participates in UDP binding. Histidine 26 functions as the Proton acceptor in the catalytic mechanism. Arginine 89 is a binding site for myricetin. Catalysis depends on aspartate 124, which acts as the Charge relay. Myricetin contacts are provided by histidine 155, glutamate 192, and phenylalanine 202. UDP contacts are provided by serine 282, serine 308, tryptophan 334, and alanine 335. Alanine 335, glutamine 337, histidine 352, tryptophan 355, asparagine 356, serine 357, and glutamate 360 together coordinate UDP-alpha-D-glucose. Histidine 352 lines the UDP pocket. Residues asparagine 356, serine 357, and glutamate 360 each contribute to the UDP site. Glycine 375 contacts myricetin. Positions 376 and 377 each coordinate UDP-alpha-D-glucose.

The protein belongs to the UDP-glycosyltransferase family. As to expression, highly expressed in flower buds, flowers and pods. Lower expression in leaves, petioles and stems.

It participates in secondary metabolite biosynthesis; flavonoid biosynthesis. Functionally, catalyzes the glycosylation of flavonoids at the 3-O-position. Glycosylates the 7-O-position if the 3-O-position is not available. Also able to perform 3-O-glycosylation of anthocyanidins. This chain is Flavonoid 3-O-glucosyltransferase (UGT78G1), found in Medicago truncatula (Barrel medic).